The following is a 112-amino-acid chain: uncharacterized protein (112 aa).

Disordered regions lie at residues methionine 1–lysine 53 and methionine 80–leucine 112. A compositionally biased stretch (polar residues) spans serine 8–alanine 22. A compositionally biased stretch (basic residues) spans glutamate 86–lysine 96. Over residues aspartate 101–leucine 112 the composition is skewed to acidic residues.

The protein resides in the nucleus. It localises to the nucleolus. This is an uncharacterized protein from Schizosaccharomyces pombe (strain 972 / ATCC 24843) (Fission yeast).